The chain runs to 543 residues: Cytochrome P450 monooxygenase 205 (543 aa).

Residues 9-29 form a helical membrane-spanning segment; that stretch reads LISLGVAALAVAVWKAIVMVI. N-linked (GlcNAc...) asparagine glycans are attached at residues asparagine 332 and asparagine 434. Cysteine 479 is a heme binding site.

This sequence belongs to the cytochrome P450 family. The cofactor is heme.

It is found in the membrane. It functions in the pathway secondary metabolite biosynthesis. Its function is as follows. Cytochrome P450 monooxygenase that is able to use carbazole and phenanthrene as substrates for oxidation. The polypeptide is Cytochrome P450 monooxygenase 205 (Postia placenta (strain ATCC 44394 / Madison 698-R) (Brown rot fungus)).